An 884-amino-acid chain; its full sequence is Probable DNA-directed RNA polymerase subunit beta (884 aa).

This sequence belongs to the RNA polymerase beta chain family.

It catalyses the reaction RNA(n) + a ribonucleoside 5'-triphosphate = RNA(n+1) + diphosphate. Required for late and very late gene expression. May be a component of the novel RNA polymerase activity induced by baculovirus infection. The sequence is that of Probable DNA-directed RNA polymerase subunit beta (LEF-8) from Orgyia pseudotsugata multicapsid polyhedrosis virus (OpMNPV).